Consider the following 304-residue polypeptide: Cell surface-binding protein OPG105 (304 aa).

In terms of domain architecture, Alpha-carbonic anhydrase spans methionine 1–glycine 235. The Virion surface segment spans residues methionine 1–threonine 275. The chain crosses the membrane as a helical span at residues phenylalanine 276–methionine 294. The Intravirion portion of the chain corresponds to serine 295 to asparagine 304.

The protein belongs to the alpha-carbonic anhydrase family. Homodimer; disulfide-linked. Post-translationally, apparently non-glycosylated.

The protein localises to the virion membrane. Binds to chondroitin sulfate on the cell surface to provide virion attachment to target cell. The sequence is that of Cell surface-binding protein OPG105 (OPG105) from Vaccinia virus (strain Copenhagen) (VACV).